The chain runs to 445 residues: Trigger factor (445 aa).

The PPIase FKBP-type domain occupies 162–247 (GDQVTIDAIG…IKAVHTAEPT (86 aa)).

The protein belongs to the FKBP-type PPIase family. Tig subfamily.

Its subcellular location is the cytoplasm. It catalyses the reaction [protein]-peptidylproline (omega=180) = [protein]-peptidylproline (omega=0). Involved in protein export. Acts as a chaperone by maintaining the newly synthesized protein in an open conformation. Functions as a peptidyl-prolyl cis-trans isomerase. In Rickettsia massiliae (strain Mtu5), this protein is Trigger factor.